A 914-amino-acid polypeptide reads, in one-letter code: Isoleucine--tRNA ligase (914 aa).

The 'HIGH' region motif lies at 64-74 (PYANGNFHLGH). E557 contributes to the L-isoleucyl-5'-AMP binding site. The 'KMSKS' region motif lies at 598–602 (AMSKS). K601 contributes to the ATP binding site. Positions 889, 892, 906, and 909 each coordinate Zn(2+).

The protein belongs to the class-I aminoacyl-tRNA synthetase family. IleS type 1 subfamily. In terms of assembly, monomer. Requires Zn(2+) as cofactor.

It is found in the cytoplasm. The catalysed reaction is tRNA(Ile) + L-isoleucine + ATP = L-isoleucyl-tRNA(Ile) + AMP + diphosphate. Catalyzes the attachment of isoleucine to tRNA(Ile). As IleRS can inadvertently accommodate and process structurally similar amino acids such as valine, to avoid such errors it has two additional distinct tRNA(Ile)-dependent editing activities. One activity is designated as 'pretransfer' editing and involves the hydrolysis of activated Val-AMP. The other activity is designated 'posttransfer' editing and involves deacylation of mischarged Val-tRNA(Ile). This Leptospira borgpetersenii serovar Hardjo-bovis (strain JB197) protein is Isoleucine--tRNA ligase.